The following is a 292-amino-acid chain: NAD kinase (292 aa).

Residue aspartate 73 is the Proton acceptor of the active site. Residues 73-74 (DG), 147-148 (NE), histidine 158, arginine 175, aspartate 177, 188-193 (TAYSLS), and glutamine 247 contribute to the NAD(+) site.

Belongs to the NAD kinase family. Requires a divalent metal cation as cofactor.

It is found in the cytoplasm. The enzyme catalyses NAD(+) + ATP = ADP + NADP(+) + H(+). Involved in the regulation of the intracellular balance of NAD and NADP, and is a key enzyme in the biosynthesis of NADP. Catalyzes specifically the phosphorylation on 2'-hydroxyl of the adenosine moiety of NAD to yield NADP. This Sodalis glossinidius (strain morsitans) protein is NAD kinase.